The sequence spans 1373 residues: Capping protein, Arp2/3 and myosin-I linker protein 3 (1373 aa).

Residues 126 to 151 (RGNADTPEGPRDTSPNSETSTSTTHS) are disordered. The span at 138 to 151 (TSPNSETSTSTTHS) shows a compositional bias: low complexity. LRR repeat units lie at residues 242-269 (SGSL…VFGE), 272-299 (SCVL…QLLC), 333-358 (ASSL…ALYS), 390-417 (CSHL…AFKQ), 422-446 (AYTL…LLQG), 453-475 (LSDL…ALQE), 480-507 (VTCI…LGKN), 510-536 (LKHL…LVQL), 541-564 (DCSL…LINA), and 568-591 (NTCL…MLSK). Disordered stretches follow at residues 864-902 (RTLS…TNID) and 970-1373 (LRHQ…PGTD). The segment covering 981–997 (PRTTPPGPGRPSVPVPG) has biased composition (pro residues). Basic and acidic residues predominate over residues 1007–1022 (RLDEGLEDFFSRRVMD). Basic residues predominate over residues 1047 to 1062 (QKRRRRGLFHFRRPRS). Positions 1078 to 1097 (LPPPPPPPPTQESPPSPDPP) are enriched in pro residues. The span at 1098 to 1108 (SLGNNSSPCWS) shows a compositional bias: low complexity. Residues 1218–1228 (RRAEATWHIAE) show a composition bias toward basic and acidic residues. The span at 1232–1243 (PNHSCQSPSPAS) shows a compositional bias: polar residues. Residues 1269–1278 (PIGPRPPKPV) are compositionally biased toward pro residues. Basic and acidic residues predominate over residues 1345 to 1358 (QSCDKLEPDRRRPP).

Belongs to the CARMIL family. Widely expressed, with much higher levels in fetal tissues than in adult ones. Highly expressed in newborn brain.

The protein localises to the cytoplasm. The protein resides in the cell membrane. The sequence is that of Capping protein, Arp2/3 and myosin-I linker protein 3 (Carmil3) from Rattus norvegicus (Rat).